The chain runs to 506 residues: Protein MGF 505-9R (506 aa).

ANK repeat units lie at residues 54 to 83 (PTHK…SLQY), 253 to 283 (QVDT…ETVE), and 313 to 343 (FVKK…KINL).

The protein belongs to the asfivirus MGF 505 family.

Functionally, plays a role in virus cell tropism, and may be required for efficient virus replication in macrophages. This is Protein MGF 505-9R from Ornithodoros (relapsing fever ticks).